The primary structure comprises 316 residues: tRNA methyltransferase 10 homolog B (316 aa).

Residues 73–98 are a coiled coil; sequence EKIVAAKKSKRKQEKERRKANRVENS. Residues 77 to 96 are disordered; that stretch reads AAKKSKRKQEKERRKANRVE. An SAM-dependent MTase TRM10-type domain is found at 113–310; it reads IKERLLEAKH…KGVSSRKGYV (198 aa).

Belongs to the class IV-like SAM-binding methyltransferase superfamily. TRM10 family.

The enzyme catalyses guanosine(9) in tRNA + S-adenosyl-L-methionine = N(1)-methylguanosine(9) in tRNA + S-adenosyl-L-homocysteine + H(+). S-adenosyl-L-methionine-dependent guanine N(1)-methyltransferase that catalyzes the formation of N(1)-methylguanine at position 9 (m1G9) in tRNAs. Probably not able to catalyze formation of N(1)-methyladenine at position 9 (m1A9) in tRNAs. This Bos taurus (Bovine) protein is tRNA methyltransferase 10 homolog B (TRMT10B).